The primary structure comprises 628 residues: Serine/threonine-protein phosphatase 2A regulatory subunit psrA (628 aa).

The segment covering 1–22 (MKNDHINYQQNLSQSPILNSNK) has biased composition (polar residues). Disordered stretches follow at residues 1 to 61 (MKND…QIPF), 500 to 558 (KKKQ…DKPS), and 577 to 628 (SSHR…YTFT). 2 stretches are compositionally biased toward low complexity: residues 23-58 (NQTQ…SPQQ) and 524-547 (QINQ…NNNN). The segment covering 600-618 (NNHTNHDSEIENEVKEDFR) has biased composition (basic and acidic residues).

It belongs to the phosphatase 2A regulatory subunit B56 family. PP2A consists of a trimeric holoenzyme, composed of a 37 kDa catalytic subunit (C subunit) and a 65 kDa constant regulatory subunit (A subunit), that associates with a variety of regulatory subunits (B subunit) such as phr2AB (B55) and psrA (B56 homolog). The trimer may partially dissociates into a core 'AC' dimer equally active compared to the trimer. Seems to play a role in proper anterior patterning (pstO and pstAB).

The protein resides in the cytoplasm. It localises to the cytosol. Functionally, involved in developmental cell fate decision. This chain is Serine/threonine-protein phosphatase 2A regulatory subunit psrA (psrA), found in Dictyostelium discoideum (Social amoeba).